The primary structure comprises 330 residues: Diacylglycerol acyltransferase/mycolyltransferase Ag85B (330 aa).

The signal sequence occupies residues 1 to 40 (MTDLSEKVRAWGRRLVVGAAAAATLPGLIGIAGGAATANA). Residue 82-83 (LR) coordinates substrate. The interval 98 to 108 (FEWYYQSGLSV) is fibronectin-binding. Cysteines 127 and 132 form a disulfide. Serine 166 and aspartate 194 together coordinate substrate. Serine 166 functions as the Nucleophile in the catalytic mechanism. Residue glutamate 270 is part of the active site. Residues 272-275 (FVRS), lysine 279, and 302-304 (HSW) each bind substrate. Residue histidine 302 is part of the active site.

Belongs to the mycobacterial A85 antigen family.

The protein resides in the secreted. The enzyme catalyses 2 alpha,alpha'-trehalose 6-mycolate = alpha,alpha'-trehalose 6,6'-bismycolate + alpha,alpha-trehalose. The catalysed reaction is an acyl-CoA + a 1,2-diacyl-sn-glycerol = a triacyl-sn-glycerol + CoA. Functionally, the antigen 85 proteins (FbpA, FbpB, FbpC) are responsible for the high affinity of mycobacteria for fibronectin, a large adhesive glycoprotein, which facilitates the attachment of M.tuberculosis to murine alveolar macrophages (AMs). They also help to maintain the integrity of the cell wall by catalyzing the transfer of mycolic acids to cell wall arabinogalactan and through the synthesis of alpha,alpha-trehalose dimycolate (TDM, cord factor). They catalyze the transfer of a mycoloyl residue from one molecule of alpha,alpha-trehalose monomycolate (TMM) to another TMM, leading to the formation of TDM. The sequence is that of Diacylglycerol acyltransferase/mycolyltransferase Ag85B (fbpB) from Mycobacterium intracellulare (strain ATCC 13950 / DSM 43223 / JCM 6384 / NCTC 13025 / 3600).